Reading from the N-terminus, the 399-residue chain is MAKNRHLFTSESVSDGHPDKIADQISDAILDAIISKDPDARVACETTVTTGLVLVAGEITTSVYVDIPKIVRDTIKEIGYTRAKYGFDAETCAVLTAIDEQSPDIAQGVDEALESRSGKEIDAAIEAIGAGDQGLMFGFATDETEELMPLPIFLAHGLARKLTELRKTNKLDYLRPDAKTQVTVEYDEFNQPVRIDTIVVSTQHHPDITQEQIAKDLHTYLFPEVIDASFLDEDTKYFINPTGRFVIGGPLGDAGLTGRKIIVDTYGGYARHGGGAFSGKDPTKVDRSGAYAARYVAKNIVAAGLAKKVEVQVAYAIGVARPVSISIDTYGTSDYSEQELIDGVNELFDLRPAGIIHMLDLRRPIYRQTAAFGHFGRSDLDLPWERTDKAEALKKLIVK.

Residue His-17 coordinates ATP. Asp-19 lines the Mg(2+) pocket. K(+) is bound at residue Glu-45. L-methionine-binding residues include Glu-58 and Gln-101. Residues 101-111 (QSPDIAQGVDE) are flexible loop. ATP-binding positions include 177-179 (DAK), 244-245 (RF), Asp-253, 259-260 (RK), Ala-276, and Lys-280. Asp-253 is a binding site for L-methionine. An L-methionine-binding site is contributed by Lys-284.

It belongs to the AdoMet synthase family. In terms of assembly, homotetramer; dimer of dimers. Mg(2+) is required as a cofactor. K(+) serves as cofactor.

Its subcellular location is the cytoplasm. The catalysed reaction is L-methionine + ATP + H2O = S-adenosyl-L-methionine + phosphate + diphosphate. The protein operates within amino-acid biosynthesis; S-adenosyl-L-methionine biosynthesis; S-adenosyl-L-methionine from L-methionine: step 1/1. In terms of biological role, catalyzes the formation of S-adenosylmethionine (AdoMet) from methionine and ATP. The overall synthetic reaction is composed of two sequential steps, AdoMet formation and the subsequent tripolyphosphate hydrolysis which occurs prior to release of AdoMet from the enzyme. The sequence is that of S-adenosylmethionine synthase from Listeria monocytogenes serotype 4b (strain CLIP80459).